The primary structure comprises 415 residues: Esterase FrsA (415 aa).

It belongs to the FrsA family.

It carries out the reaction a carboxylic ester + H2O = an alcohol + a carboxylate + H(+). Functionally, catalyzes the hydrolysis of esters. This is Esterase FrsA from Serratia proteamaculans (strain 568).